A 291-amino-acid polypeptide reads, in one-letter code: G1/S-specific cyclin-D2 (291 aa).

Residues 264–291 (QQQQSNPSKTIEELDQASTPTDVRDINL) form a disordered region. The residue at position 282 (T282) is a Phosphothreonine.

Belongs to the cyclin family. Cyclin D subfamily. As to quaternary structure, interacts with the CDK4 and CDK6 protein kinases to form a serine/threonine kinase holoenzyme complex. The cyclin subunit imparts substrate specificity to the complex. Phosphorylation at Thr-282 by MAP kinases is required for ubiquitination and degradation by the DCX(AMBRA1) complex. In terms of processing, ubiquitinated by the DCX(AMBRA1) complex during the transition from G1 to S cell phase, leading to its degradation: ubiquitination is dependent on Thr-282 phosphorylation. The DCX(AMBRA1) complex represents the major regulator of CCND2 stability during the G1/S transition.

Its subcellular location is the nucleus. It is found in the cytoplasm. The protein resides in the nucleus membrane. Functionally, regulatory component of the cyclin D2-CDK4 (DC) complex that phosphorylates and inhibits members of the retinoblastoma (RB) protein family including RB1 and regulates the cell-cycle during G(1)/S transition. Phosphorylation of RB1 allows dissociation of the transcription factor E2F from the RB/E2F complex and the subsequent transcription of E2F target genes which are responsible for the progression through the G(1) phase. Hypophosphorylates RB1 in early G(1) phase. Cyclin D-CDK4 complexes are major integrators of various mitogenenic and antimitogenic signals. This Gallus gallus (Chicken) protein is G1/S-specific cyclin-D2 (CCND2).